The sequence spans 191 residues: NADH-quinone oxidoreductase subunit B (191 aa).

Positions 52, 53, 118, and 148 each coordinate [4Fe-4S] cluster.

It belongs to the complex I 20 kDa subunit family. As to quaternary structure, NDH-1 is composed of 14 different subunits. Subunits NuoB, C, D, E, F, and G constitute the peripheral sector of the complex. [4Fe-4S] cluster is required as a cofactor.

It localises to the cell inner membrane. It catalyses the reaction a quinone + NADH + 5 H(+)(in) = a quinol + NAD(+) + 4 H(+)(out). NDH-1 shuttles electrons from NADH, via FMN and iron-sulfur (Fe-S) centers, to quinones in the respiratory chain. The immediate electron acceptor for the enzyme in this species is believed to be a menaquinone. Couples the redox reaction to proton translocation (for every two electrons transferred, four hydrogen ions are translocated across the cytoplasmic membrane), and thus conserves the redox energy in a proton gradient. The protein is NADH-quinone oxidoreductase subunit B of Azobacteroides pseudotrichonymphae genomovar. CFP2.